We begin with the raw amino-acid sequence, 323 residues long: Solute carrier family 35 member B1 (323 aa).

8 helical membrane-spanning segments follow: residues 15–35 (LVCFLGVFVCYFYYGILQETI), 51–71 (FALSLVFVQCIVNALFAKLLI), 85–105 (WLYAACSLSYLGAMVSSNSAL), 136–156 (YPLSKYLCVLLIVLGVALFMY), 169–189 (TFGYGELLLLLSLTLDGLTGV), 205–225 (MMLYINLWSSLFLGAGIVFTG), 253–273 (LGQTFIFMTVVYFGPLTCSII), and 286–306 (VILFSNPISSIQWVGTILVFL). Residues 319–323 (KKPSH) carry the Di-lysine motif motif.

This sequence belongs to the nucleotide-sugar transporter family. SLC35B subfamily.

The protein resides in the endoplasmic reticulum membrane. Probable sugar transporter. The polypeptide is Solute carrier family 35 member B1 (slc35b1) (Xenopus tropicalis (Western clawed frog)).